A 309-amino-acid polypeptide reads, in one-letter code: Probable 4-hydroxy-2-oxoglutarate aldolase, mitochondrial (309 aa).

49–50 provides a ligand contact to substrate; that stretch reads SN. Residue Lys173 is the Schiff-base intermediate with substrate of the active site.

The protein belongs to the DapA family.

It carries out the reaction (4S)-4-hydroxy-2-oxoglutarate = glyoxylate + pyruvate. The enzyme catalyses (4R)-4-hydroxy-2-oxoglutarate = glyoxylate + pyruvate. Its activity is regulated as follows. Inhibited by divalent cations. Its function is as follows. Catalyzes the final step in the metabolic pathway of hydroxyproline. Involved in osmoadaptation. This chain is Probable 4-hydroxy-2-oxoglutarate aldolase, mitochondrial, found in Emericella nidulans (strain FGSC A4 / ATCC 38163 / CBS 112.46 / NRRL 194 / M139) (Aspergillus nidulans).